Reading from the N-terminus, the 1012-residue chain is DNA polymerase catalytic subunit (1012 aa).

The segment at 1-31 (MDFFNPFIDPTRGGPRNTVRQPTPSQSPTVP) is disordered. Residues 21–31 (QPTPSQSPTVP) are compositionally biased toward low complexity.

Belongs to the DNA polymerase type-B family. Forms a complex with the ssDNA-binding protein, the DNA polymerase processivity factor, and the alkaline exonuclease. Interacts with the putative helicase-primase complex subunit; this interaction may coordinate leading and lagging strand DNA synthesis at the replication fork.

Its subcellular location is the host nucleus. It carries out the reaction DNA(n) + a 2'-deoxyribonucleoside 5'-triphosphate = DNA(n+1) + diphosphate. The catalysed reaction is Endonucleolytic cleavage to 5'-phosphomonoester.. In terms of biological role, replicates viral genomic DNA. The replication complex is composed of six viral proteins: the DNA polymerase, processivity factor, primase, primase-associated factor, helicase, and ssDNA-binding protein. Additionally, the polymerase contains an intrinsic ribonuclease H (RNase H) activity that specifically degrades RNA/DNA heteroduplexes or duplex DNA substrates in the 5' to 3' direction. Therefore, it can catalyze the excision of the RNA primers that initiate the synthesis of Okazaki fragments at a replication fork during viral DNA replication. In Human herpesvirus 8 type P (isolate GK18) (HHV-8), this protein is DNA polymerase catalytic subunit (ORF9).